We begin with the raw amino-acid sequence, 197 residues long: MTTLQERVAAHFAESIRAKQEAGKVLVEPTVQAAELMLQCLMNDGKILACGNGGSAADAQHFAAEMTGRFEKERMELAAVALTTDTSALTAIGNDYGFDHVFSKQVRALGRAGDVLVGISTSGNSANVIEAVKAAHERDMHVIALTGRDGGKIAAILKDTDVLLNVPHPRTARIQENHILLIHAMCDCIDSVLLEGM.

One can recognise an SIS domain in the interval 37–197 (MLQCLMNDGK…CIDSVLLEGM (161 aa)). 52–54 (NGG) contacts substrate. The Zn(2+) site is built by His61 and Glu65. Substrate contacts are provided by residues Glu65, 94–95 (ND), 120–122 (STS), Ser125, and Gln175. Zn(2+) contacts are provided by Gln175 and His183.

The protein belongs to the SIS family. GmhA subfamily. As to quaternary structure, homotetramer. Zn(2+) is required as a cofactor.

Its subcellular location is the cytoplasm. It carries out the reaction 2 D-sedoheptulose 7-phosphate = D-glycero-alpha-D-manno-heptose 7-phosphate + D-glycero-beta-D-manno-heptose 7-phosphate. It participates in carbohydrate biosynthesis; D-glycero-D-manno-heptose 7-phosphate biosynthesis; D-glycero-alpha-D-manno-heptose 7-phosphate and D-glycero-beta-D-manno-heptose 7-phosphate from sedoheptulose 7-phosphate: step 1/1. It functions in the pathway bacterial outer membrane biogenesis; LOS core biosynthesis. Functionally, catalyzes the isomerization of sedoheptulose 7-phosphate in D-glycero-D-manno-heptose 7-phosphate. This is Phosphoheptose isomerase from Neisseria meningitidis serogroup A / serotype 4A (strain DSM 15465 / Z2491).